A 1062-amino-acid polypeptide reads, in one-letter code: MACFSNETQIEIDVHDLVEAPIRYDSIESIYSIPSSALCCVNAVGSHSLMSKKVKAQKLPMIEQFEIEGSGVSASDDCCRSDDYKLRIQRPEIVRVYYRRRKRPLRECLLDQAVAVKTESVELDEIDCFEEKKRRKIGNCELVKSGMESIGLRRCKENNAFSGNKQNGSSRRKGSSSKNQDKATLASRSAKKWVRLSYDGVDPTSFIGLQCKVFWPLDALWYEGSIVGYSAERKRYTVKYRDGCDEDIVFDREMIKFLVSREEMELLHLKFCTSNVTVDGRDYDEMVVLAATLDECQDFEPGDIVWAKLAGHAMWPAVIVDESIIGERKGLNNKVSGGGSLLVQFFGTHDFARIKVKQAISFIKGLLSPSHLKCKQPRFEEGMQEAKMYLKAHRLPERMSQLQKGADSVDSDMANSTEEGNSGGDLLNDGEVWLRPTEHVDFRHIIGDLLIINLGKVVTDSQFFKDENHIWPEGYTAMRKFTSLTDHSASALYKMEVLRDAETKTHPLFIVTADSGEQFKGPTPSACWNKIYNRIKKVQNSDSPNILGEELNGSGTDMFGLSNPEVIKLVQDLSKSRPSSHVSMCKNSLGRHQNQPTGYRPVRVDWKDLDKCNVCHMDEEYENNLFLQCDKCRMMVHAKCYGELEPCDGALWLCNLCRPGAPDMPPRCCLCPVVGGAMKPTTDGRWAHLACAIWIPETCLSDVKKMEPIDGVNKVSKDRWKLMCTICGVSYGACIQCSNNSCRVAYHPLCARAAGLCVELENDMSVEGEEADQCIRMLSFCKRHRQTSTACLGSEDRIKSATHKTSEYLPPPNPSGCARTEPYNCFGRRGRKEPEALAAASSKRLFVENQPYVIGGYSRLEFSTYKSIHGSKVSQMNTPSNILSMAEKYRYMRETYRKRLAFGKSGIHGFGIFAKLPHRAGDMMIEYTGELVRPSIADKREQLIYNSMVGAGTYMFRIDDERVIDATRTGSIAHLINHSCVPNCYSRVITVNGDEHIIIFAKRHIPKWEELTYDYRFFSIGERLSCSCGFPGCRGVVNDTEAEEQHAKICVPRCDLIDWTAE.

The tract at residues N159–T184 is disordered. One can recognise a PWWP domain in the interval P301–G365. A disordered region spans residues Q401–G424. The 60-residue stretch at D441–D500 folds into the FYR N-terminal domain. Residues K504–K586 enclose the FYR C-terminal domain. A Phorbol-ester/DAG-type zinc finger spans residues R591–C647. Residues Y599–E1062 form an interaction with PIP5 region. The segment at L609–G660 adopts a PHD-type 1 zinc-finger fold. Residues P665–T698 form a C2HC pre-PHD-type zinc finger. The PHD-type 2 zinc-finger motif lies at L722–R785. In terms of domain architecture, SET spans K898 to R1016. H908 serves as a coordination point for S-adenosyl-L-methionine. S947 is a glycosylation site (O-linked (GlcNAc) serine). S-adenosyl-L-methionine contacts are provided by residues Y954 and N977 to H978. Positions 980, 1026, 1028, and 1033 each coordinate Zn(2+). In terms of domain architecture, Post-SET spans E1022–N1038.

Belongs to the class V-like SAM-binding methyltransferase superfamily. Histone-lysine methyltransferase family. TRX/MLL subfamily. In terms of assembly, interacts with PIP5. Interacts with WDR5A. Binds to CLF in the nucleus. Interacts with NRPB1 CTD domain, especially when NRPB1 is phosphorylated on 'Ser-5' of the heptapeptide repeat. Component of a nuclear protein complex containing at least TATA binding proteins (TBPs, e.g. TBP1 and TBP2) and ATX1. Associates with ULT1 for trimethylating 'Lys-4' on histone H3 (H3K4me3) at flower MADS box gene loci. Interacts with SEC. Interacts with A4/EF1A in the cytoplasm on the nuclear periphery. Activated via O-glycosylation by SEC; this modification triggers FLC locus H3K4me3 histone modification, thus preventing premature flowering. Strongly expressed in cotyledons, but weak levels in the first true leaves, except at the hydothodes. Ubiquitous with higher levels in dividing tissues, including inflorescence meristem and flower primordia. Expressed also in leaves (especially at hydathodes), in growing inflorescence stems and in the mature flowers. In terms of tissue distribution, strongly expressed in young seedlings.

It localises to the nucleus. It is found in the cytoplasm. The protein localises to the perinuclear region. It carries out the reaction L-lysyl(4)-[histone H3] + 3 S-adenosyl-L-methionine = N(6),N(6),N(6)-trimethyl-L-lysyl(4)-[histone H3] + 3 S-adenosyl-L-homocysteine + 3 H(+). The enzyme catalyses L-lysyl-[protein] + 3 S-adenosyl-L-methionine = N(6),N(6),N(6)-trimethyl-L-lysyl-[protein] + 3 S-adenosyl-L-homocysteine + 3 H(+). Functionally, binds to the promoter and regulates the transcription of target genes, maintaining them in an active state; at promoters, required for TATA binding proteins (TBPs, e.g. TBP1 and TBP2) and RNA polymerase II (Pol II) recruitment, and, in a subsequent event, is recruited by a phosphorylated form of Pol II to the +300-bp region of transcribed sequences to trimethylates nucleosomes. Histone trimethyltransferase that trimethylates 'Lys-4' of histone H3 (H3K4me3); H3 'Lys-4' methylation represents a specific tag for epigenetic transcriptional activation and is required for efficient elongation of transcription but not for transcription initiation. Methylates only a limited fraction of nucleosomes of target genes (e.g. FLC, NAP, XTH33 and WRKY70). Necessary for WDR5A occupancy at WRKY70 and LTP7 genes. Required to maintain the active state of class A (AP1 and AP2), class B (PI and AP3) and class C (AG, AGAMOUS) floral homeotic genes at early stages of flower development. Together with CLF, modulates AG nucleosome methylation statement. Involved in epigenetic regulation (e.g. H3K4me3) of the floral repressors FLC, FT and SOC1 to prevent the transition from vegetative to reproductive development, independently of the photoperiod; binds the active FLC locus before flowering, but this interaction is released upon the transition to flowering. Regulates floral organ identity and flowering transition. Functions as a receptor for the lipid messenger phosphatidylinositol 5-phosphate (PI5P), which negatively regulates its transcriptional activation activity. Exhibits histone methylase activity and subsequent transcriptional regulation on WRKY70 gene, and, to a lower extent on secondary defense-response targets salicylic acid (SA)-responsive gene PR1 and jasmonic acid (JA)-responsive gene THI2.1. Involved in response to dehydration stress-response in both abscisic acid (ABA)-dependent and ABA-independent pathways; this includes specific genes (e.g. COR15A, ADH1, CBF4, RD29A, RD29B, RD26, ABF3, NCED3 and ABA3) epigenetic regulation (e.g. H3K4me3 and Pol II recruitment) to promote their transcription and influence ABA production. Implicated in stomatal closure regulation. Indirect repressor of XTH genes (XTH33). Necessary for the phosphorylation of Pol II NRPB1 (e.g. Ser5P and Ser2P) at the promoters of target genes, thus regulating both early and late stages of transcription. Controls root growth and architecture by regulating the timing of root development, stem cell niche maintenance (e.g. quiescent center (QC)), and cell patterning during primary and lateral root development. Modulates cell cycle duration, cell production, and the transition from cell proliferation in the root apical meristem (RAM) to cell elongation. Trimethylates A4/EF1A post-translationally at Lys-396. Required for actin cytoskeleton organization. The protein is Histone H3-lysine(4) N-trimethyltransferase ATX1 of Arabidopsis thaliana (Mouse-ear cress).